The chain runs to 71 residues: Delta-actitoxin-Avd2b 4 (71 aa).

The signal sequence occupies residues methionine 1–alanine 20. The propeptide occupies asparagine 21–glycine 41. 3 disulfides stabilise this stretch: cysteine 46/cysteine 61, cysteine 47/cysteine 55, and cysteine 49/cysteine 66.

Belongs to the sea anemone short toxin (type III) family.

The protein resides in the secreted. Its subcellular location is the nematocyst. Voltage-gated sodium channel (Nav) inhibitor. 1 uM completely inhibits insect voltage-gated sodium channel inactivation (DmNav1 from D.melanogaster). The sequence is that of Delta-actitoxin-Avd2b 4 from Anemonia viridis (Snakelocks anemone).